The primary structure comprises 551 residues: Calcium-dependent protein kinase 13 (551 aa).

A lipid anchor (N-myristoyl glycine) is attached at G2. The disordered stretch occupies residues 15–78 (SFKQTASQRH…APADLGSVLG (64 aa)). In terms of domain architecture, Protein kinase spans 88–346 (YAMGRKLGQG…AHEVLCHPWI (259 aa)). ATP-binding positions include 94-102 (LGQGQFGTT) and K117. D212 (proton acceptor) is an active-site residue. The interval 352-382 (APDRPLDPAVLSRIKQFSAMNKLKKMALRVI) is autoinhibitory domain. 4 consecutive EF-hand domains span residues 389–424 (EEIAGLKEMFQTMDADNSGAITYDELKEGLRKYGST), 425–460 (LKDTEIRDLMDAADIDNSGTIDYIEFIAATLHLNKL), 461–496 (EREEHLVAAFSYFDKDGSGYITVDELQQACKEHNMP), and 497–530 (DAFLDDVINEADQDNDGRIDYGEFVAMMTKGNMG). D402, D404, S406, E413, D438, D440, S442, T444, E449, D474, D476, S478, Y480, E485, D508, D510, D512, R514, and E519 together coordinate Ca(2+).

This sequence belongs to the protein kinase superfamily. Ser/Thr protein kinase family. CDPK subfamily. Expressed in vascular tissues of crowns and roots, vascular bundles and central cylinder. Expressed in roots, leaf blades, spikelets and developing seeds.

The protein resides in the membrane. It catalyses the reaction L-seryl-[protein] + ATP = O-phospho-L-seryl-[protein] + ADP + H(+). The enzyme catalyses L-threonyl-[protein] + ATP = O-phospho-L-threonyl-[protein] + ADP + H(+). With respect to regulation, activated by calcium. Autophosphorylation may play an important role in the regulation of the kinase activity. In terms of biological role, may play a role in signal transduction pathways that involve calcium as a second messenger. May function in signal transduction pathways that positively regulate responses to cold, salt and drought stresses. The protein is Calcium-dependent protein kinase 13 of Oryza sativa subsp. japonica (Rice).